The primary structure comprises 374 residues: Putative C-&gt;U-editing enzyme APOBEC-4 (374 aa).

In terms of domain architecture, CMP/dCMP-type deaminase spans 60–176; the sequence is PQTKHLTFYE…AWNRKALQSL (117 aa). A Zn(2+)-binding site is contributed by His-92. Glu-94 acts as the Proton donor in catalysis. Zn(2+) contacts are provided by Cys-126 and Cys-133. The tract at residues 259 to 280 is disordered; the sequence is EKHPLGSAAPAQRQPTRGQDPR.

The protein belongs to the cytidine and deoxycytidylate deaminase family. Zn(2+) serves as cofactor. In terms of tissue distribution, predominantly expressed in testis.

Its function is as follows. Putative C to U editing enzyme whose physiological substrate is not yet known. The chain is Putative C-&gt;U-editing enzyme APOBEC-4 (Apobec4) from Mus musculus (Mouse).